The chain runs to 484 residues: F-box/LRR-repeat protein At3g59210 (484 aa).

Residues 6-54 (KDIINCLPDNLLCQILSNLSTKEAALTSLLSKRWRYLFALVPNLDFDVL) form the F-box domain. 5 LRR repeats span residues 144–170 (KIGP…NLDS), 172–197 (VFEE…SLLN), 205–234 (SCSV…SFDT), 303–334 (TLYL…TIES), and 335–360 (HPEL…VFQG).

This is F-box/LRR-repeat protein At3g59210 from Arabidopsis thaliana (Mouse-ear cress).